The chain runs to 718 residues: Coiled-coil domain-containing protein 157 (718 aa).

Positions 300-603 (LRAQLEDAEG…LTKIREVAQQ (304 aa)) form a coiled coil. The span at 469-482 (RGSLDEAEAQRSEL) shows a compositional bias: basic and acidic residues. Disordered regions lie at residues 469-490 (RGSLDEAEAQRSELEEQLQSLQ) and 617-690 (PPYK…TQNP). Positions 639 to 659 (TGRRQSPGSRTSSTGRTHPGG) are enriched in low complexity.

This chain is Coiled-coil domain-containing protein 157 (Ccdc157), found in Mus musculus (Mouse).